The sequence spans 102 residues: Cysteine-rich venom protein VAR9 (102 aa).

An N-terminal signal peptide occupies residues 1–19 (MILLKLYLTLAAILCQSRG). Residues 41–80 (NKHNDLRRTVDPPAKNMLKMSWDNIIAESAKRAALRCNYK) form the SCP domain.

Belongs to the CRISP family. Contains 8 disulfide bonds. As to expression, expressed by the venom gland.

The protein resides in the secreted. In terms of biological role, blocks ryanodine receptors, and potassium channels. This chain is Cysteine-rich venom protein VAR9, found in Varanus varius (Lace monitor lizard).